The following is an 80-amino-acid chain: Small ribosomal subunit protein bS16 (80 aa).

The protein belongs to the bacterial ribosomal protein bS16 family.

The chain is Small ribosomal subunit protein bS16 from Blochmanniella pennsylvanica (strain BPEN).